The primary structure comprises 516 residues: Polyprenol-phosphate-mannose--protein mannosyltransferase (516 aa).

The next 9 membrane-spanning stretches (helical) occupy residues 113-133 (YNGL…VMLV), 143-163 (STLV…SFVS), 166-186 (TALL…CLMV), 234-254 (WSGL…DAIA), 275-295 (AAYV…APWF), 384-404 (VMLV…GWAL), 413-433 (WRYG…FADI), 437-457 (MYFF…ALIL), and 473-493 (LGLL…AWMY).

It belongs to the glycosyltransferase 39 family.

Its subcellular location is the cell membrane. It participates in protein modification; protein glycosylation. Its function is as follows. Protein O-mannosyltransferase that catalyzes the transfer of a single mannose residue from a polyprenol phospho-mannosyl lipidic donor to the hydroxyl group of selected serine and threonine residues in acceptor proteins. In Mycolicibacterium smegmatis (strain ATCC 700084 / mc(2)155) (Mycobacterium smegmatis), this protein is Polyprenol-phosphate-mannose--protein mannosyltransferase.